The primary structure comprises 689 residues: Glycine--tRNA ligase beta subunit (689 aa).

This sequence belongs to the class-II aminoacyl-tRNA synthetase family. Tetramer of two alpha and two beta subunits.

The protein localises to the cytoplasm. It carries out the reaction tRNA(Gly) + glycine + ATP = glycyl-tRNA(Gly) + AMP + diphosphate. The chain is Glycine--tRNA ligase beta subunit from Acinetobacter baumannii (strain ACICU).